Reading from the N-terminus, the 343-residue chain is GTPase Obg (343 aa).

Residues 1-159 (MKFLDQAKVY…LNIWLRLKLI (159 aa)) form the Obg domain. Positions 160–327 (ADAGLVGLPN…VLRALMTVIA (168 aa)) constitute an OBG-type G domain. Residues 166 to 173 (GLPNAGKS), 191 to 195 (FTTLH), 212 to 215 (DIPG), 279 to 282 (SQVD), and 308 to 310 (SAV) each bind GTP. Residues serine 173 and threonine 193 each contribute to the Mg(2+) site.

This sequence belongs to the TRAFAC class OBG-HflX-like GTPase superfamily. OBG GTPase family. In terms of assembly, monomer. It depends on Mg(2+) as a cofactor.

It localises to the cytoplasm. Functionally, an essential GTPase which binds GTP, GDP and possibly (p)ppGpp with moderate affinity, with high nucleotide exchange rates and a fairly low GTP hydrolysis rate. Plays a role in control of the cell cycle, stress response, ribosome biogenesis and in those bacteria that undergo differentiation, in morphogenesis control. In Mesorhizobium japonicum (strain LMG 29417 / CECT 9101 / MAFF 303099) (Mesorhizobium loti (strain MAFF 303099)), this protein is GTPase Obg.